The following is a 209-amino-acid chain: Thymidine kinase (209 aa).

ATP-binding positions include G16–T23 and D90–Q93. Residue E91 is the Proton acceptor of the active site.

This sequence belongs to the thymidine kinase family. As to quaternary structure, homotetramer.

Its subcellular location is the cytoplasm. It catalyses the reaction thymidine + ATP = dTMP + ADP + H(+). The sequence is that of Thymidine kinase from Onion yellows phytoplasma (strain OY-M).